Reading from the N-terminus, the 427-residue chain is Probable glucuronosyltransferase Os03g0107900 (427 aa).

The Cytoplasmic portion of the chain corresponds to 1–33 (MAMRGDPKQRRASASAPHGGAAHHVADKLRRHS). The helical; Signal-anchor for type II membrane protein transmembrane segment at 34–54 (TFLLLLLLLWFALSLYLFLSA) threads the bilayer. Topologically, residues 55–427 (TPPPPRPAFL…QRRHVESWKR (373 aa)) are lumenal. N-linked (GlcNAc...) asparagine glycans are attached at residues Asn-136, Asn-168, Asn-264, and Asn-374.

The protein belongs to the glycosyltransferase 47 family.

Its subcellular location is the golgi apparatus membrane. Its function is as follows. Involved in the synthesis of glucuronoxylan hemicellulose in secondary cell walls. In Oryza sativa subsp. japonica (Rice), this protein is Probable glucuronosyltransferase Os03g0107900.